The sequence spans 411 residues: L-cysteine:1D-myo-inositol 2-amino-2-deoxy-alpha-D-glucopyranoside ligase (411 aa).

Zn(2+) is bound at residue Cys-43. Residues 43 to 46 (CGIT), Thr-58, and 81 to 83 (NVT) contribute to the L-cysteinyl-5'-AMP site. A 'HIGH' region motif is present at residues 45–55 (ITPYDATHLGH). A 'ERGGDP' region motif is present at residues 186–191 (QRGGDP). Trp-226 provides a ligand contact to L-cysteinyl-5'-AMP. Residue Cys-230 participates in Zn(2+) binding. An L-cysteinyl-5'-AMP-binding site is contributed by 248 to 250 (GSD). Residue His-255 participates in Zn(2+) binding. Residue Ile-282 participates in L-cysteinyl-5'-AMP binding. The 'KMSKS' region signature appears at 288 to 292 (KMSKS).

Belongs to the class-I aminoacyl-tRNA synthetase family. MshC subfamily. As to quaternary structure, monomer. Requires Zn(2+) as cofactor.

The enzyme catalyses 1D-myo-inositol 2-amino-2-deoxy-alpha-D-glucopyranoside + L-cysteine + ATP = 1D-myo-inositol 2-(L-cysteinylamino)-2-deoxy-alpha-D-glucopyranoside + AMP + diphosphate + H(+). Its function is as follows. Catalyzes the ATP-dependent condensation of GlcN-Ins and L-cysteine to form L-Cys-GlcN-Ins. This is L-cysteine:1D-myo-inositol 2-amino-2-deoxy-alpha-D-glucopyranoside ligase from Mycobacterium ulcerans (strain Agy99).